Here is a 373-residue protein sequence, read N- to C-terminus: Pulmonary surfactant-associated protein B (373 aa).

Residues 1–22 (MAKSHLLPWLLLLPILCGPGTA) form the signal peptide. Residues 23–187 (AAITYSLACA…PQTQDLSEQL (165 aa)) constitute a propeptide that is removed on maturation. The 41-residue stretch at 24 to 64 (AITYSLACAQGPEFWCQSLEQALQCRALGHCLQEVWGHVEA) folds into the Saposin A-type domain. Saposin B-type domains follow at residues 64–146 (ADDL…KPRH), 191–268 (PIPY…SSED), and 287–362 (QDSD…AAPF). 9 cysteine pairs are disulfide-bonded: Cys68/Cys142, Cys71/Cys136, Cys99/Cys111, Cys195/Cys264, Cys198/Cys258, Cys222/Cys233, Cys291/Cys358, Cys294/Cys352, and Cys317/Cys327. A glycan (N-linked (GlcNAc...) asparagine) is linked at Asn73. Positions 267-373 (EDSAGPALPA…PLQCVHSPHF (107 aa)) are excised as a propeptide. Residue Asn303 is glycosylated (N-linked (GlcNAc...) asparagine).

Homodimer; disulfide-linked.

It localises to the secreted. It is found in the extracellular space. The protein resides in the surface film. Pulmonary surfactant-associated proteins promote alveolar stability by lowering the surface tension at the air-liquid interface in the peripheral air spaces. SP-B increases the collapse pressure of palmitic acid to nearly 70 millinewtons per meter. The protein is Pulmonary surfactant-associated protein B (SFTPB) of Bos taurus (Bovine).